The sequence spans 561 residues: uncharacterized protein (561 aa).

2 disordered regions span residues 369–390 (SVPE…LSKG) and 429–515 (EGLG…GESE). Residue serine 383 is modified to Phosphoserine. The span at 465 to 503 (NISPESSRFGTPSDPNSSSQSLGNEVLSRPNSNSNSAES) shows a compositional bias: polar residues.

This is an uncharacterized protein from Schizosaccharomyces pombe (strain 972 / ATCC 24843) (Fission yeast).